The sequence spans 185 residues: TATA-box-binding protein 3 (185 aa).

Tandem repeats lie at residues 7–84 (IENV…ANTL) and 100–178 (VQNI…KTEF).

This sequence belongs to the TBP family.

General factor that plays a role in the activation of archaeal genes transcribed by RNA polymerase. Binds specifically to the TATA box promoter element which lies close to the position of transcription initiation. The protein is TATA-box-binding protein 3 of Methanosarcina mazei (strain ATCC BAA-159 / DSM 3647 / Goe1 / Go1 / JCM 11833 / OCM 88) (Methanosarcina frisia).